The chain runs to 213 residues: Thiopurine S-methyltransferase (213 aa).

The S-adenosyl-L-methionine site is built by Trp10, Leu45, Glu66, and Arg121.

Belongs to the class I-like SAM-binding methyltransferase superfamily. TPMT family.

The protein localises to the cytoplasm. The catalysed reaction is S-adenosyl-L-methionine + a thiopurine = S-adenosyl-L-homocysteine + a thiopurine S-methylether.. The polypeptide is Thiopurine S-methyltransferase (Aliivibrio salmonicida (strain LFI1238) (Vibrio salmonicida (strain LFI1238))).